Reading from the N-terminus, the 175-residue chain is MSEQKIEVVGKLGSTYGIRGWLRLYSSTEETESIFDYQPWFLKIKGQWQPIELESWRYHNNDLIVKLKGSDDRESAQLLTNAEIGVDLSVFPELEEGDYYWHDLIGCQVINLEDYSMGVVTELMETGSNDVLVVRANSKDAFGKQERLIPFLYEQVVKRVDLATKTITVDWDAGF.

The PRC barrel domain maps to 96–175; the sequence is EGDYYWHDLI…TITVDWDAGF (80 aa).

Belongs to the RimM family. Binds ribosomal protein uS19.

It localises to the cytoplasm. In terms of biological role, an accessory protein needed during the final step in the assembly of 30S ribosomal subunit, possibly for assembly of the head region. Essential for efficient processing of 16S rRNA. May be needed both before and after RbfA during the maturation of 16S rRNA. It has affinity for free ribosomal 30S subunits but not for 70S ribosomes. This is Ribosome maturation factor RimM from Actinobacillus pleuropneumoniae serotype 5b (strain L20).